The chain runs to 90 residues: Small ribosomal subunit protein uS15c (90 aa).

The protein belongs to the universal ribosomal protein uS15 family. In terms of assembly, part of the 30S ribosomal subunit.

Its subcellular location is the plastid. The protein localises to the chloroplast. In Zea mays (Maize), this protein is Small ribosomal subunit protein uS15c (rps15-A).